We begin with the raw amino-acid sequence, 435 residues long: GTPase Der (435 aa).

EngA-type G domains follow at residues 4-167 (PTLA…PSED) and 175-350 (IKFS…ENQT). GTP is bound by residues 10 to 17 (GRPNVGKS), 57 to 61 (DTGGI), 119 to 122 (NKVD), 181 to 188 (GRPNVGKS), 228 to 232 (DTAGI), and 293 to 296 (NKWD). Residues 351–435 (RRIQSSVLND…PIHIIARKRK (85 aa)) form the KH-like domain.

This sequence belongs to the TRAFAC class TrmE-Era-EngA-EngB-Septin-like GTPase superfamily. EngA (Der) GTPase family. Associates with the 50S ribosomal subunit.

In terms of biological role, GTPase that plays an essential role in the late steps of ribosome biogenesis. The protein is GTPase Der of Lacticaseibacillus casei (strain BL23) (Lactobacillus casei).